A 467-amino-acid polypeptide reads, in one-letter code: L-seryl-tRNA(Sec) selenium transferase (467 aa).

N6-(pyridoxal phosphate)lysine is present on lysine 298.

The protein belongs to the SelA family. The cofactor is pyridoxal 5'-phosphate.

It is found in the cytoplasm. It catalyses the reaction L-seryl-tRNA(Sec) + selenophosphate + H(+) = L-selenocysteinyl-tRNA(Sec) + phosphate. Its pathway is aminoacyl-tRNA biosynthesis; selenocysteinyl-tRNA(Sec) biosynthesis; selenocysteinyl-tRNA(Sec) from L-seryl-tRNA(Sec) (bacterial route): step 1/1. In terms of biological role, converts seryl-tRNA(Sec) to selenocysteinyl-tRNA(Sec) required for selenoprotein biosynthesis. The chain is L-seryl-tRNA(Sec) selenium transferase from Alkaliphilus oremlandii (strain OhILAs) (Clostridium oremlandii (strain OhILAs)).